The chain runs to 472 residues: Membrane-bound lytic murein transglycosylase F (472 aa).

Residues 1–24 (MRLLVIFLLALLLMACKEAPKPLA) form the signal peptide. A non-LT domain region spans residues 25–259 (DPRTTKEIIV…HLIDRYYGHA (235 aa)). The segment at 260–472 (DRLKPVDVTT…NGFGNTLSQE (213 aa)) is LT domain. Glu306 is a catalytic residue.

It in the N-terminal section; belongs to the bacterial solute-binding protein 3 family. The protein in the C-terminal section; belongs to the transglycosylase Slt family.

It localises to the cell outer membrane. The catalysed reaction is Exolytic cleavage of the (1-&gt;4)-beta-glycosidic linkage between N-acetylmuramic acid (MurNAc) and N-acetylglucosamine (GlcNAc) residues in peptidoglycan, from either the reducing or the non-reducing ends of the peptidoglycan chains, with concomitant formation of a 1,6-anhydrobond in the MurNAc residue.. Murein-degrading enzyme that degrades murein glycan strands and insoluble, high-molecular weight murein sacculi, with the concomitant formation of a 1,6-anhydromuramoyl product. Lytic transglycosylases (LTs) play an integral role in the metabolism of the peptidoglycan (PG) sacculus. Their lytic action creates space within the PG sacculus to allow for its expansion as well as for the insertion of various structures such as secretion systems and flagella. The polypeptide is Membrane-bound lytic murein transglycosylase F (Methylobacillus flagellatus (strain ATCC 51484 / DSM 6875 / VKM B-1610 / KT)).